A 66-amino-acid chain; its full sequence is Metallothionein (66 aa).

N-acetylserine is present on S1. Cd(2+)-binding residues include C9, C13, C18, C20, C24, C26, C30, C32, C35, C38, C40, C45, C47, C51, C57, C59, C63, and C65.

This sequence belongs to the metallothionein superfamily. Type 2 family.

Its function is as follows. The metallothioneins are involved in the cellular sequestration of toxic metal ions and regulation of essential trace elements. This Arianta arbustorum (Land snail) protein is Metallothionein.